Here is a 332-residue protein sequence, read N- to C-terminus: UPF0194 membrane protein YbhG (332 aa).

A signal peptide spans Met1–Ala16. Positions Arg141 to Pro210 form a coiled coil.

This sequence belongs to the UPF0194 family.

Its subcellular location is the periplasm. The protein is UPF0194 membrane protein YbhG (ybhG) of Shigella flexneri.